A 253-amino-acid polypeptide reads, in one-letter code: Chemokine-binding protein (253 aa).

Residues methionine 1 to methionine 17 form the signal peptide. The interval threonine 62–proline 87 is disordered. Over residues threonine 65–aspartate 86 the composition is skewed to acidic residues.

This sequence belongs to the orthopoxvirus OPG001 family. Binds to host CC chemokines, such as RANTES/CCL5, MIP-1alpha/CCL3, MCP-1/CCL2 and eotaxin.

The protein resides in the secreted. Inhibits host immune defense by binding to host chemokines. Binds host CC chemokines (beta chemokines) such as RANTES with high affinity, but not CXC or C chemokines (alpha and gamma chemokines). This Variola virus (isolate Human/India/Ind3/1967) (VARV) protein is Chemokine-binding protein (OPG001).